The primary structure comprises 354 residues: Holliday junction branch migration complex subunit RuvB (354 aa).

The tract at residues 1–22 (MTLQTDDFAPAPARRVVSAAPA) is disordered. Residues 5 to 194 (TDDFAPAPAR…FGIVARLEFY (190 aa)) form a large ATPase domain (RuvB-L) region. Residues 9-22 (APAPARRVVSAAPA) are compositionally biased toward low complexity. ATP is bound by residues Leu33, Arg34, Gly75, Lys78, Thr79, Thr80, 141-143 (EDY), Arg184, Tyr194, and Arg231. Thr79 provides a ligand contact to Mg(2+). A small ATPAse domain (RuvB-S) region spans residues 195 to 265 (SAQELARIVK…IAERALAMLD (71 aa)). The segment at 268–354 (PEGLDVMDRK…GAQAPGLFAV (87 aa)) is head domain (RuvB-H). Arg323 and Arg328 together coordinate DNA.

This sequence belongs to the RuvB family. Homohexamer. Forms an RuvA(8)-RuvB(12)-Holliday junction (HJ) complex. HJ DNA is sandwiched between 2 RuvA tetramers; dsDNA enters through RuvA and exits via RuvB. An RuvB hexamer assembles on each DNA strand where it exits the tetramer. Each RuvB hexamer is contacted by two RuvA subunits (via domain III) on 2 adjacent RuvB subunits; this complex drives branch migration. In the full resolvosome a probable DNA-RuvA(4)-RuvB(12)-RuvC(2) complex forms which resolves the HJ.

It is found in the cytoplasm. The catalysed reaction is ATP + H2O = ADP + phosphate + H(+). In terms of biological role, the RuvA-RuvB-RuvC complex processes Holliday junction (HJ) DNA during genetic recombination and DNA repair, while the RuvA-RuvB complex plays an important role in the rescue of blocked DNA replication forks via replication fork reversal (RFR). RuvA specifically binds to HJ cruciform DNA, conferring on it an open structure. The RuvB hexamer acts as an ATP-dependent pump, pulling dsDNA into and through the RuvAB complex. RuvB forms 2 homohexamers on either side of HJ DNA bound by 1 or 2 RuvA tetramers; 4 subunits per hexamer contact DNA at a time. Coordinated motions by a converter formed by DNA-disengaged RuvB subunits stimulates ATP hydrolysis and nucleotide exchange. Immobilization of the converter enables RuvB to convert the ATP-contained energy into a lever motion, pulling 2 nucleotides of DNA out of the RuvA tetramer per ATP hydrolyzed, thus driving DNA branch migration. The RuvB motors rotate together with the DNA substrate, which together with the progressing nucleotide cycle form the mechanistic basis for DNA recombination by continuous HJ branch migration. Branch migration allows RuvC to scan DNA until it finds its consensus sequence, where it cleaves and resolves cruciform DNA. This chain is Holliday junction branch migration complex subunit RuvB, found in Verminephrobacter eiseniae (strain EF01-2).